A 466-amino-acid chain; its full sequence is Asparagine--tRNA ligase (466 aa).

It belongs to the class-II aminoacyl-tRNA synthetase family. Homodimer.

It is found in the cytoplasm. The enzyme catalyses tRNA(Asn) + L-asparagine + ATP = L-asparaginyl-tRNA(Asn) + AMP + diphosphate + H(+). This Shigella dysenteriae serotype 1 (strain Sd197) protein is Asparagine--tRNA ligase.